The chain runs to 429 residues: Growth/differentiation factor 2 (429 aa).

A signal peptide spans 1–22 (MCPGALWVALPLLSLLAGSLQG). Positions 23-319 (KPLQSWGRGS…AGSTLARRKR (297 aa)) are excised as a propeptide. Asn71 and Asn136 each carry an N-linked (GlcNAc...) asparagine glycan. Residues 283–301 (VLKKLSKDGSTEAGESSHE) show a composition bias toward basic and acidic residues. Positions 283–308 (VLKKLSKDGSTEAGESSHEEDTDGHV) are disordered. 3 disulfides stabilise this stretch: Cys327/Cys393, Cys356/Cys426, and Cys360/Cys428. An interaction with ENG region spans residues 402-416 (SVLYKDDMGVPTLKY).

It belongs to the TGF-beta family. As to quaternary structure, homodimer; disulfide-linked. Detected in extracellular fluid as mature homodimer, and in complex with its propeptide. Interacts with ACVRL1, BMPR2 and ACVR2B with high affinity (in vitro). Identified in a complex with ACVRL1 and ACVR2B. Has ten times lower affinity for ACVR2A (in vitro). Interacts with ENG, forming a heterotetramer with a 2:2 stoichiometry. Can form a heteromeric complex with ENG and ACVRL1. Interacts with type I receptor ACVR1. A reversible disulfide bond can be formed between the two subunits in the homodimer; this has no effect on GDF2 activity. As to expression, detected in blood plasma (at protein level).

It localises to the secreted. Its function is as follows. Potent circulating inhibitor of angiogenesis. Signals through the type I activin receptor ACVRL1 but not other Alks. Signaling through SMAD1 in endothelial cells requires TGF-beta coreceptor endoglin/ENG. In Homo sapiens (Human), this protein is Growth/differentiation factor 2 (GDF2).